Here is a 266-residue protein sequence, read N- to C-terminus: Glucosamine-6-phosphate deaminase (266 aa).

Asp72 acts as the Proton acceptor; for enolization step in catalysis. Asp141 (for ring-opening step) is an active-site residue. The active-site Proton acceptor; for ring-opening step is His143. Glu148 acts as the For ring-opening step in catalysis.

Belongs to the glucosamine/galactosamine-6-phosphate isomerase family. NagB subfamily. In terms of assembly, homohexamer.

It catalyses the reaction alpha-D-glucosamine 6-phosphate + H2O = beta-D-fructose 6-phosphate + NH4(+). It participates in amino-sugar metabolism; N-acetylneuraminate degradation; D-fructose 6-phosphate from N-acetylneuraminate: step 5/5. With respect to regulation, allosterically activated by N-acetylglucosamine 6-phosphate (GlcNAc6P). Catalyzes the reversible isomerization-deamination of glucosamine 6-phosphate (GlcN6P) to form fructose 6-phosphate (Fru6P) and ammonium ion. The sequence is that of Glucosamine-6-phosphate deaminase from Vibrio cholerae serotype O1 (strain ATCC 39541 / Classical Ogawa 395 / O395).